The sequence spans 469 residues: Glutamate--tRNA ligase (469 aa).

The 'HIGH' region signature appears at 11-21 (PSPTGFIHLGN). A compositionally biased stretch (basic and acidic residues) spans 118 to 131 (GEKPRYDGTWRPEP). The interval 118–138 (GEKPRYDGTWRPEPGKVLPEP) is disordered. Residues 243–247 (KMSKR) carry the 'KMSKS' region motif. K246 contacts ATP.

It belongs to the class-I aminoacyl-tRNA synthetase family. Glutamate--tRNA ligase type 1 subfamily. As to quaternary structure, monomer.

Its subcellular location is the cytoplasm. The enzyme catalyses tRNA(Glu) + L-glutamate + ATP = L-glutamyl-tRNA(Glu) + AMP + diphosphate. Functionally, catalyzes the attachment of glutamate to tRNA(Glu) in a two-step reaction: glutamate is first activated by ATP to form Glu-AMP and then transferred to the acceptor end of tRNA(Glu). This Burkholderia vietnamiensis (strain G4 / LMG 22486) (Burkholderia cepacia (strain R1808)) protein is Glutamate--tRNA ligase.